We begin with the raw amino-acid sequence, 244 residues long: Adenosine 5'-phosphosulfate reductase (244 aa).

Residues Cys129, Cys130, Cys212, and Cys215 each contribute to the [4Fe-4S] cluster site. Cys240 acts as the Nucleophile; cysteine thiosulfonate intermediate in catalysis.

The protein belongs to the PAPS reductase family. CysH subfamily. It depends on [4Fe-4S] cluster as a cofactor.

Its subcellular location is the cytoplasm. It catalyses the reaction [thioredoxin]-disulfide + sulfite + AMP + 2 H(+) = adenosine 5'-phosphosulfate + [thioredoxin]-dithiol. It functions in the pathway sulfur metabolism; hydrogen sulfide biosynthesis; sulfite from sulfate. Its function is as follows. Catalyzes the formation of sulfite from adenosine 5'-phosphosulfate (APS) using thioredoxin as an electron donor. The polypeptide is Adenosine 5'-phosphosulfate reductase (Neisseria meningitidis serogroup A / serotype 4A (strain DSM 15465 / Z2491)).